Reading from the N-terminus, the 1040-residue chain is Multidrug resistance protein MdtB (1040 aa).

12 helical membrane passes run 25–45, 347–367, 369–389, 396–416, 440–460, 472–492, 537–557, 863–883, 888–908, 910–930, 968–988, and 998–1018; these read LLMA…PVAA, LMLA…NIPA, IIPG…MVFL, LTLM…IVVI, IGFT…PLLF, FAVT…TLTP, WLTL…WIVI, LGST…VLGV, FIHP…ALLA, IIAG…LIGI, ILMT…STGV, and IAMV…TPVI.

It belongs to the resistance-nodulation-cell division (RND) (TC 2.A.6) family. MdtB subfamily. As to quaternary structure, part of a tripartite efflux system composed of MdtA, MdtB and MdtC. MdtB forms a heteromultimer with MdtC.

The protein resides in the cell inner membrane. The chain is Multidrug resistance protein MdtB from Salmonella schwarzengrund (strain CVM19633).